The following is a 576-amino-acid chain: DNA primase (576 aa).

The CHC2-type zinc finger occupies 40–64 (CPFHNEKTPSFNVVAKKQFYHCFGC). One can recognise a Toprim domain in the interval 251 to 333 (DSIIVVEGYM…GLDAGFIFLP (83 aa)). Residues Glu257, Asp301, and Asp303 each coordinate Mg(2+).

The protein belongs to the DnaG primase family. In terms of assembly, monomer. Interacts with DnaB. Requires Zn(2+) as cofactor. Mg(2+) serves as cofactor.

The catalysed reaction is ssDNA + n NTP = ssDNA/pppN(pN)n-1 hybrid + (n-1) diphosphate.. Its function is as follows. RNA polymerase that catalyzes the synthesis of short RNA molecules used as primers for DNA polymerase during DNA replication. The protein is DNA primase of Legionella pneumophila.